The following is a 352-amino-acid chain: ATP synthase subunit a 2 (352 aa).

A signal peptide spans 1–26; the sequence is MRKKAISRILALVVPVLLSLNSQAFA. 7 helical membrane-spanning segments follow: residues 112–132, 172–192, 195–215, 232–252, 264–284, 289–309, and 310–330; these read VVMI…AGAS, FLPY…LGLI, GATA…TFVI, HLTA…EILG, LFAN…ISFI, IVAV…ELFV, and AFLQ…LATA.

Belongs to the ATPase A chain family. F-type ATPases have 2 components, CF(1) - the catalytic core - and CF(0) - the membrane proton channel. CF(1) has five subunits: alpha(3), beta(3), gamma(1), delta(1), epsilon(1). CF(0) has four main subunits: a, b, b' and c.

Its subcellular location is the cell inner membrane. Key component of the proton channel; it plays a direct role in the translocation of protons across the membrane. The chain is ATP synthase subunit a 2 from Chlorobaculum tepidum (strain ATCC 49652 / DSM 12025 / NBRC 103806 / TLS) (Chlorobium tepidum).